The following is a 576-amino-acid chain: NADH-quinone oxidoreductase subunit C/D (576 aa).

An NADH dehydrogenase I subunit C region spans residues 1-176 (MAWISLEKAK…NLEGLFNYDR (176 aa)). Residues 200-576 (SQIVLNWGPL…IDPVVGETDR (377 aa)) form an NADH dehydrogenase I subunit D region.

The protein in the N-terminal section; belongs to the complex I 30 kDa subunit family. In the C-terminal section; belongs to the complex I 49 kDa subunit family. As to quaternary structure, NDH-1 is composed of 13 different subunits. Subunits NuoB, CD, E, F, and G constitute the peripheral sector of the complex.

It localises to the cell inner membrane. The enzyme catalyses a quinone + NADH + 5 H(+)(in) = a quinol + NAD(+) + 4 H(+)(out). Functionally, NDH-1 shuttles electrons from NADH, via FMN and iron-sulfur (Fe-S) centers, to quinones in the respiratory chain. The immediate electron acceptor for the enzyme in this species is believed to be ubiquinone. Couples the redox reaction to proton translocation (for every two electrons transferred, four hydrogen ions are translocated across the cytoplasmic membrane), and thus conserves the redox energy in a proton gradient. The chain is NADH-quinone oxidoreductase subunit C/D from Sulfurihydrogenibium sp. (strain YO3AOP1).